We begin with the raw amino-acid sequence, 306 residues long: MTTNDAGTGNPAEQPARGAKQQPATETSRAGRDLRAAIVVGLSIGLVLIAVLVFVPRVWVAIVAVATLVATHEVVRRLREAGYLIPVIPLLIGGQAAVWLTWPFGAVGALAGFGGMVVVCMIWRLFMQDSVTRPTTGGAPSPGNYLSDVSATVFLAVWVPLFCSFGAMLVYPENGSGWVFCMMIAVIASDVGGYAVGVLFGKHPMVPTISPKKSWEGFAGSLVCGITATIITATFLVGKTPWIGALLGVLFVLTTALGDLVESQVKRDLGIKDMGRLLPGHGGLMDRLDGILPSAVAAWIVLTLLP.

The tract at residues 1–28 (MTTNDAGTGNPAEQPARGAKQQPATETS) is disordered. Helical transmembrane passes span 36–56 (AAIVVGLSIGLVLIAVLVFVP), 82–102 (GYLIPVIPLLIGGQAAVWLTW), 103–123 (PFGAVGALAGFGGMVVVCMIW), 151–171 (ATVFLAVWVPLFCSFGAMLVY), 180–200 (FCMMIAVIASDVGGYAVGVLF), 218–238 (FAGSLVCGITATIITATFLVG), 241–261 (PWIGALLGVLFVLTTALGDLV), and 285–305 (MDRLDGILPSAVAAWIVLTLL).

The protein belongs to the CDS family.

The protein localises to the cell membrane. It carries out the reaction a 1,2-diacyl-sn-glycero-3-phosphate + CTP + H(+) = a CDP-1,2-diacyl-sn-glycerol + diphosphate. It functions in the pathway phospholipid metabolism; CDP-diacylglycerol biosynthesis; CDP-diacylglycerol from sn-glycerol 3-phosphate: step 3/3. The chain is Phosphatidate cytidylyltransferase (cdsA) from Mycobacterium bovis (strain ATCC BAA-935 / AF2122/97).